Consider the following 2561-residue polypeptide: Plipastatin synthase subunit A (2561 aa).

A domain 1 (glutamate-activating) region spans residues 1-1038; sequence MSEHTYSLTH…ATVIREGTDS (1038 aa). Residues 2–300 are condensation 1; sequence SEHTYSLTHA…SSLPIRITVD (299 aa). The tract at residues 485–888 is adenylation 1; it reads TYAELDMYAS…SIEGVREAAV (404 aa). Residues 961–1036 enclose the Carrier 1 domain; that stretch reads APRNVTEMKL…GLATVIREGT (76 aa). Ser996 carries the O-(pantetheine 4'-phosphoryl)serine modification. Residues 1048-1338 are condensation 2; that stretch reads KQETYPVSSA…NTLALRTRPE (291 aa). The domain 2 (D-ornithine-activating) stretch occupies residues 1048 to 2554; it reads KQETYPVSSA…ELTLSALSSI (1507 aa). The adenylation 2 stretch occupies residues 1525 to 1932; that stretch reads SYRLLNERAN…QTGLVREAAV (408 aa). Positions 2007-2081 constitute a Carrier 2 domain; that stretch reads APVNDLQKTM…ELCGHITPLA (75 aa). At Ser2042 the chain carries O-(pantetheine 4'-phosphoryl)serine. The interval 2089–2554 is epimerization; that stretch reads AEGEAELTPI…ELTLSALSSI (466 aa).

It belongs to the ATP-dependent AMP-binding enzyme family. Pantetheine 4'-phosphate is required as a cofactor.

In terms of biological role, this protein is a multifunctional enzyme, able to activate and polymerize the amino acids Glu and Orn as part of the biosynthesis of the lipopeptide antibiotic lipastatin. The Orn residue is further epimerized to the D-isomer form. The activation sites for these amino acids consist of individual domains. This Bacillus subtilis (strain 168) protein is Plipastatin synthase subunit A (ppsA).